The chain runs to 89 residues: Small ribosomal subunit protein uS15 (89 aa).

It belongs to the universal ribosomal protein uS15 family. Part of the 30S ribosomal subunit. Forms a bridge to the 50S subunit in the 70S ribosome, contacting the 23S rRNA.

One of the primary rRNA binding proteins, it binds directly to 16S rRNA where it helps nucleate assembly of the platform of the 30S subunit by binding and bridging several RNA helices of the 16S rRNA. Its function is as follows. Forms an intersubunit bridge (bridge B4) with the 23S rRNA of the 50S subunit in the ribosome. This Bordetella avium (strain 197N) protein is Small ribosomal subunit protein uS15.